The chain runs to 1531 residues: Slit homolog 1 protein (1531 aa).

The first 33 residues, 1 to 33, serve as a signal peptide directing secretion; the sequence is MALTPQRGSSSGLSRPELWLLLWAAAWRLGATA. One can recognise an LRRNT domain in the interval 34 to 61; the sequence is CPALCTCTGTTVDCHGTGLQAIPKNIPR. LRR repeat units lie at residues 62–83, 86–107, 110–131, 134–155, 158–179, and 182–203; these read NTER…DFAG, QLRV…AFDD, ELER…LFQN, ALSR…AFRG, DLKN…AFRA, and GLEV…SFNH. N-linked (GlcNAc...) asparagine glycosylation occurs at asparagine 72. N-linked (GlcNAc...) asparagine glycosylation is present at asparagine 192. Residues 215–265 form the LRRCT 1 domain; that stretch reads NHLFCDCHLAWLSQWLRQRPTIGLFTQCSGPASLRGLNVAEVQKSEFSCSG. An LRRNT 2 domain is found at 273-309; that stretch reads PACTLSSGSCPAMCSCSNGIVDCRGKGLTAIPANLPE. An intrachain disulfide couples cysteine 286 to cysteine 295. LRR repeat units follow at residues 310–331, 334–355, 358–379, 382–403, and 406–427; these read TMTE…AFSP, KLRR…AFQG, SLNS…VFGG, TLQL…AFQD, and NLSL…TFTS. The N-linked (GlcNAc...) asparagine glycan is linked to asparagine 406. The 51-residue stretch at 439–489 folds into the LRRCT 2 domain; it reads NPFICDCNLKWLADFLRTNPIETTGARCASPRRLANKRIGQIKSKKFRCSA. Disulfide bonds link cysteine 443–cysteine 466, cysteine 445–cysteine 487, cysteine 513–cysteine 519, and cysteine 517–cysteine 526. The LRRNT 3 domain maps to 504 to 540; the sequence is NSECTSDVACPHKCRCEASVVECSGLKLSKIPERIPQ. LRR repeat units follow at residues 541 to 562, 566 to 587, 590 to 611, 614 to 635, and 638 to 659; these read STTE…GLFK, HLKK…TFEG, SVSE…MFRG, GLRT…SFTG, and NVRL…AFDT. The N-linked (GlcNAc...) asparagine glycan is linked to asparagine 571. An N-linked (GlcNAc...) asparagine glycan is attached at asparagine 630. The 51-residue stretch at 671–721 folds into the LRRCT 3 domain; it reads NPFNCNCQLAWLGDWLRKRKIVTGNPRCQNPDFLRQIPLQDVAFPDFRCEE. Intrachain disulfides connect cysteine 675/cysteine 698 and cysteine 677/cysteine 719. The LRRNT 4 domain maps to 725–761; that stretch reads EVGCLPRPQCPQECACLDTVVRCSNKHLQALPKGIPK. Residues asparagine 762, asparagine 801, and asparagine 806 are each glycosylated (N-linked (GlcNAc...) asparagine). LRR repeat units lie at residues 762–783, 785–806, 809–830, and 833–854; these read NVTE…LSTF, YLQL…SFTN, QLTT…AFQG, and SLRL…IFAD. In terms of domain architecture, LRRCT 4 spans 866 to 916; it reads NPLYCDCHLRWLSSWVKTGYKEPGIARCAGPPEMEGKLLLTTPAKKFECQG. EGF-like domains lie at 927-962, 964-1003, 1005-1041, 1043-1081, 1083-1119, and 1124-1160; these read DPCL…RNCE, SLDS…LTCG, NTDD…RACE, LVDF…DNCS, NQDD…QLCE, and PRNS…PECE. 18 cysteine pairs are disulfide-bonded: cysteine 929–cysteine 940, cysteine 934–cysteine 950, cysteine 952–cysteine 961, cysteine 968–cysteine 979, cysteine 973–cysteine 991, cysteine 993–cysteine 1002, cysteine 1009–cysteine 1020, cysteine 1014–cysteine 1029, cysteine 1031–cysteine 1040, cysteine 1047–cysteine 1060, cysteine 1054–cysteine 1069, cysteine 1071–cysteine 1080, cysteine 1087–cysteine 1098, cysteine 1092–cysteine 1107, cysteine 1109–cysteine 1118, cysteine 1128–cysteine 1139, cysteine 1133–cysteine 1148, and cysteine 1150–cysteine 1159. An N-linked (GlcNAc...) asparagine glycan is attached at asparagine 1026. An N-linked (GlcNAc...) asparagine glycan is attached at asparagine 1079. Residues 1163–1336 form the Laminin G-like domain; sequence LSVNFVDRDT…QMKPGVVPGC (174 aa). Asparagine 1186, asparagine 1256, and asparagine 1303 each carry an N-linked (GlcNAc...) asparagine glycan. Disulfide bonds link cysteine 1310-cysteine 1336, cysteine 1339-cysteine 1349, cysteine 1344-cysteine 1359, cysteine 1361-cysteine 1370, cysteine 1378-cysteine 1388, cysteine 1383-cysteine 1398, cysteine 1400-cysteine 1409, cysteine 1419-cysteine 1429, cysteine 1424-cysteine 1439, cysteine 1441-cysteine 1450, cysteine 1456-cysteine 1495, cysteine 1474-cysteine 1509, cysteine 1485-cysteine 1525, and cysteine 1489-cysteine 1527. 3 consecutive EGF-like domains span residues 1337-1371, 1374-1410, and 1415-1451; these read EPCR…LHCD, VDGP…ALCN, and VAEP…ELCE. Positions 1456 to 1531 constitute a CTCK domain; that stretch reads CRGDPVRDFH…PTKCGCAPCA (76 aa).

In terms of assembly, interacts with ROBO1 and GREM1. In terms of tissue distribution, in adult brains expressed in the hippocampus, cerebral cortex, and olfactory bulb but not in the cerebellum. In embryo expressed in cerebral cortex.

The protein resides in the secreted. In terms of biological role, thought to act as molecular guidance cue in cellular migration, and function appears to be mediated by interaction with roundabout homolog receptors. During neural development involved in axonal navigation at the ventral midline of the neural tube and projection of axons to different regions. SLIT1 and SLIT2 together seem to be essential for midline guidance in the forebrain by acting as repulsive signal preventing inappropriate midline crossing by axons projecting from the olfactory bulb. The chain is Slit homolog 1 protein (Slit1) from Rattus norvegicus (Rat).